The following is a 163-amino-acid chain: Glycine cleavage system H protein, mitochondrial (163 aa).

The transit peptide at 1-34 directs the protein to the mitochondrion; that stretch reads MALRMWASSAANALGVSCAPKSHLLPALSLSRCF. A Lipoyl-binding domain is found at 56-137; it reads VATIGITDHA…YEEGWMVKVK (82 aa). Lys96 carries the N6-lipoyllysine modification.

The protein belongs to the GcvH family. The glycine cleavage system is composed of four proteins: P, T, L and H. (R)-lipoate serves as cofactor.

The protein resides in the mitochondrion. In terms of biological role, the glycine cleavage system catalyzes the degradation of glycine. The H protein shuttles the methylamine group of glycine from the P protein to the T protein. In Mesembryanthemum crystallinum (Common ice plant), this protein is Glycine cleavage system H protein, mitochondrial (GDCSH).